Reading from the N-terminus, the 488-residue chain is MEVLSIAIVSFSFLLFLFFILRDSRPKNLPPGPRPSPIVGNLLQLGDKPHAEFAKLAQKYGELFSLKLGSQTVVVASSPAAAAEILKTHDKILSGRYVFQSFRVKEHVENSIVWSECNDNWKLLRKVCRTELFTPKMIESQSEIREAKAREMVKFLRGKEGEVVKIVEVVFGTLVNIFGNLIFSKDVFDLEDPTGGSVELKEHLWKLLDMGNSTNPADYFPIMGKLDLFGQRRAVAEVLQQIYDVWGVMLKERRGTKGSESKNDFVDVLLNAGLDDQKINALLMELFGAGTETSASTIEWAITELTKKPLVVSKIRLELVNVVGDNTVKESDLPHLPYLQAFVKETLRLHPPTPLLLPRRALETCTVMNYTIPKECQIMVNAWAIGRDPKTWDDPLNFKPERFLSSDVDYKGNDFELIPFGGGRRICPGLPLASQFSNLIVATLVQNFEWSLPQGMSTSELSMDEKFGLTLQKDPPLLIVLKARASNI.

A helical membrane pass occupies residues 2 to 21 (EVLSIAIVSFSFLLFLFFIL). A heme-binding site is contributed by C427.

This sequence belongs to the cytochrome P450 family. Requires heme as cofactor. In terms of tissue distribution, expressed at low levels in roots.

The protein resides in the endoplasmic reticulum membrane. Its subcellular location is the microsome membrane. It carries out the reaction (S)-N-methylcoclaurine + reduced [NADPH--hemoprotein reductase] + O2 = (S)-3'-hydroxy-N-methylcoclaurine + oxidized [NADPH--hemoprotein reductase] + H2O + H(+). It functions in the pathway alkaloid biosynthesis; (S)-reticuline biosynthesis; (S)-reticuline from (S)-norcoclaurine: step 3/4. Its function is as follows. 3'-hydroxylation of (S)-N-methylcoclaurine. In Coptis japonica (Japanese goldthread), this protein is Probable (S)-N-methylcoclaurine 3'-hydroxylase isozyme 2 (CYP80B2).